A 79-amino-acid chain; its full sequence is Acyl carrier protein (79 aa).

Residues 2 to 77 (DNIEQRVKKI…LAIDFAKSKA (76 aa)) form the Carrier domain. The residue at position 37 (Ser-37) is an O-(pantetheine 4'-phosphoryl)serine.

This sequence belongs to the acyl carrier protein (ACP) family. 4'-phosphopantetheine is transferred from CoA to a specific serine of apo-ACP by AcpS. This modification is essential for activity because fatty acids are bound in thioester linkage to the sulfhydryl of the prosthetic group.

Its subcellular location is the cytoplasm. The protein operates within lipid metabolism; fatty acid biosynthesis. Carrier of the growing fatty acid chain in fatty acid biosynthesis. The protein is Acyl carrier protein of Polynucleobacter necessarius subsp. necessarius (strain STIR1).